The following is a 358-amino-acid chain: Neutral protease 2 homolog MEP8 (358 aa).

Residues 1-19 form the signal peptide; that stretch reads MKLSSILLALAALVSPAFS. A propeptide spanning residues 20–179 is cleaved from the precursor; it reads YAISHLPRSE…EKAIKPVDKR (160 aa). Disulfide bonds link C186–C256 and C263–C281. Zn(2+) is bound at residue H305. The active site involves E306. Zn(2+) contacts are provided by H309 and D320.

This sequence belongs to the peptidase M35 family. Zn(2+) is required as a cofactor.

It is found in the secreted. The enzyme catalyses Preferential cleavage of bonds with hydrophobic residues in P1'. Also 3-Asn-|-Gln-4 and 8-Gly-|-Ser-9 bonds in insulin B chain.. Its function is as follows. Secreted metalloproteinase that allows assimilation of proteinaceous substrates. Shows high activities on basic nuclear substrates such as histone and protamine. May be involved in virulence. The protein is Neutral protease 2 homolog MEP8 (MEP8) of Coccidioides posadasii (strain C735) (Valley fever fungus).